Reading from the N-terminus, the 235-residue chain is tRNA (guanine-N(1)-)-methyltransferase (235 aa).

S-adenosyl-L-methionine-binding positions include glycine 114 and 134 to 139 (IGDYIL).

This sequence belongs to the RNA methyltransferase TrmD family. Homodimer.

The protein resides in the cytoplasm. It carries out the reaction guanosine(37) in tRNA + S-adenosyl-L-methionine = N(1)-methylguanosine(37) in tRNA + S-adenosyl-L-homocysteine + H(+). Specifically methylates guanosine-37 in various tRNAs. The sequence is that of tRNA (guanine-N(1)-)-methyltransferase from Ehrlichia ruminantium (strain Welgevonden).